The chain runs to 213 residues: Adenylate kinase (213 aa).

Residue 10-15 (GAGKGT) coordinates ATP. The NMP stretch occupies residues 30-59 (STGDIFRANIKNNTELGQKAKTYMDKGELV). AMP contacts are provided by residues Thr31, Arg36, 57–59 (ELV), 85–88 (GFPR), and Gln92. Positions 126–163 (GRRACVGCGATYHIQFNPTKVEGICDACGEKLILRDDD) are LID. Arg127 contacts ATP. Zn(2+) is bound by residues Cys130 and Cys133. 136 to 137 (TY) contacts ATP. Zn(2+) contacts are provided by Cys150 and Cys153. AMP is bound by residues Arg160 and Arg171. Gln199 is a binding site for ATP.

This sequence belongs to the adenylate kinase family. In terms of assembly, monomer.

Its subcellular location is the cytoplasm. It carries out the reaction AMP + ATP = 2 ADP. It participates in purine metabolism; AMP biosynthesis via salvage pathway; AMP from ADP: step 1/1. Catalyzes the reversible transfer of the terminal phosphate group between ATP and AMP. Plays an important role in cellular energy homeostasis and in adenine nucleotide metabolism. The chain is Adenylate kinase from Lachnospira eligens (strain ATCC 27750 / DSM 3376 / VPI C15-48 / C15-B4) (Eubacterium eligens).